A 415-amino-acid polypeptide reads, in one-letter code: Serine hydroxymethyltransferase (415 aa).

Residues Leu-117 and 121–123 (GHL) each bind (6S)-5,6,7,8-tetrahydrofolate. The residue at position 226 (Lys-226) is an N6-(pyridoxal phosphate)lysine. (6S)-5,6,7,8-tetrahydrofolate contacts are provided by residues Glu-241 and 349–351 (SPF).

It belongs to the SHMT family. Homodimer. The cofactor is pyridoxal 5'-phosphate.

It localises to the cytoplasm. The catalysed reaction is (6R)-5,10-methylene-5,6,7,8-tetrahydrofolate + glycine + H2O = (6S)-5,6,7,8-tetrahydrofolate + L-serine. It functions in the pathway one-carbon metabolism; tetrahydrofolate interconversion. It participates in amino-acid biosynthesis; glycine biosynthesis; glycine from L-serine: step 1/1. In terms of biological role, catalyzes the reversible interconversion of serine and glycine with tetrahydrofolate (THF) serving as the one-carbon carrier. This reaction serves as the major source of one-carbon groups required for the biosynthesis of purines, thymidylate, methionine, and other important biomolecules. Also exhibits THF-independent aldolase activity toward beta-hydroxyamino acids, producing glycine and aldehydes, via a retro-aldol mechanism. This is Serine hydroxymethyltransferase from Geotalea uraniireducens (strain Rf4) (Geobacter uraniireducens).